A 398-amino-acid chain; its full sequence is O-methyltransferase mpaG' (398 aa).

Ser-144 contacts (4E,8E)-10-(4,6-dihydroxy-7-methyl-3-oxo-1,3-dihydro-2-benzofuran-5-yl)-4,8-dimethyldeca-4,8-dienoate. Position 144 (Ser-144) interacts with 4-farnesyl-3,5-dihydroxy-6-methylphthalide. Ser-144 is a 6-O-desmethylmycophenolate binding site. Residue Asn-197 coordinates S-adenosyl-L-homocysteine. (4E,8E)-10-(4,6-dihydroxy-7-methyl-3-oxo-1,3-dihydro-2-benzofuran-5-yl)-4,8-dimethyldeca-4,8-dienoate is bound at residue Tyr-199. Residue Tyr-199 participates in 4-farnesyl-3,5-dihydroxy-6-methylphthalide binding. A 6-O-desmethylmycophenolate-binding site is contributed by Tyr-199. S-adenosyl-L-homocysteine-binding residues include Tyr-203, Asp-237, Gly-239, His-244, Asp-245, Asp-264, and Arg-265. Asp-264 contributes to the S-adenosyl-L-methionine binding site. 2 residues coordinate (4E,8E)-10-(4,6-dihydroxy-7-methyl-3-oxo-1,3-dihydro-2-benzofuran-5-yl)-4,8-dimethyldeca-4,8-dienoate: Arg-265 and Gln-267. 6-O-desmethylmycophenolate is bound at residue Arg-265. Asp-286, Ile-287, and His-302 together coordinate S-adenosyl-L-homocysteine. Residue Ser-303 coordinates (4E,8E)-10-(4,6-dihydroxy-7-methyl-3-oxo-1,3-dihydro-2-benzofuran-5-yl)-4,8-dimethyldeca-4,8-dienoate. Ser-303 contributes to the 4-farnesyl-3,5-dihydroxy-6-methylphthalide binding site. Ser-303 serves as a coordination point for 6-O-desmethylmycophenolate. The Proton acceptor role is filled by His-306. Catalysis depends on residues Glu-335 and Glu-362.

Belongs to the class I-like SAM-binding methyltransferase superfamily. Cation-independent O-methyltransferase family. In terms of assembly, homodimer.

The protein resides in the cytoplasm. It is found in the cytosol. It catalyses the reaction (4E,8E)-10-(4,6-dihydroxy-7-methyl-3-oxo-1,3-dihydro-2-benzofuran-5-yl)-4,8-dimethyldeca-4,8-dienoate + S-adenosyl-L-methionine = (4E,8E)-10-(4-hydroxy-6-methoxy-7-methyl-3-oxo-1,3-dihydro-2-benzofuran-5-yl)-4,8-dimethyldeca-4,8-dienoate + S-adenosyl-L-homocysteine + H(+). The enzyme catalyses 4-farnesyl-3,5-dihydroxy-6-methylphthalide + S-adenosyl-L-methionine = 4-farnesyl-3,5-dihydroxy-6-methoxylphthalide + S-adenosyl-L-homocysteine + H(+). It carries out the reaction 6-O-desmethylmycophenolate + S-adenosyl-L-methionine = mycophenolate + S-adenosyl-L-homocysteine + H(+). It participates in secondary metabolite biosynthesis; terpenoid biosynthesis. In terms of biological role, O-methyltransferase; part of the gene cluster that mediates the biosynthesis of mycophenolic acid (MPA), the first isolated antibiotic natural product in the world obtained from a culture of Penicillium brevicompactum in 1893. MpaG' catalyzes the 5-O-methylation of three precursors in MPA biosynthesis including demethylmycophenolic acid (DMMPA), 4-farnesyl-3,5-dihydroxy-6-methylphthalide (FDHMP), and an intermediate containing three fewer carbon atoms compared to FDHMP (FDHMP-3C) with different catalytic efficiencies. The first step of the pathway is the synthesis of 5-methylorsellinic acid (5MOA) by the cytosolic polyketide synthase mpaC. 5MOA is then converted to the phthalide compound 5,7-dihydroxy-4,6-dimethylphthalide (DHMP) by the endoplasmic reticulum-bound cytochrome P450 monooxygenase mpaDE. MpaDE first catalyzes hydroxylation of 5-MOA to 4,6-dihydroxy-2-(hydroxymethyl)-3-methylbenzoic acid (DHMB). MpaDE then acts as a lactone synthase that catalyzes the ring closure to convert DHMB into DHMP. The next step is the prenylation of DHMP by the Golgi apparatus-associated prenyltransferase mpaA to yield farnesyl-DHMP (FDHMP). The ER-bound oxygenase mpaB then mediates the oxidative cleavage the C19-C20 double bond in FDHMP to yield FDHMP-3C via a mycophenolic aldehyde intermediate. The O-methyltransferase mpaG catalyzes the methylation of FDHMP-3C to yield MFDHMP-3C. MpaG and mpaB can also switch the order in which they act and, in this case, the conversion of FDHMP to MFDHMP-3C can take place via 5-O-methyl-FDHMP (MFDHMP). After the cytosolic methylation of FDHMP-3C, MFDHMP-3C enters into peroxisomes probably via free diffusion due to its low molecular weight. Upon a peroxisomal CoA ligation reaction, catalyzed by a beta-oxidation component enzyme acyl-CoA ligase ACL891, MFDHMP-3C-CoA would then be restricted to peroxisomes for the following beta-oxidation pathway steps. The peroxisomal beta-oxidation machinery than converts MFDHMP-3C-CoA into MPA_CoA, via a beta-oxidation chain-shortening process. Finally mpaH acts as a peroxisomal acyl-CoA hydrolase with high substrate specificity toward MPA-CoA to release the final product MPA. MpaH can also hydrolyze DMMPA-CoA to release demethylmycophenolic acid (DMMPA) that is further converted to MPA by mpaG. This is O-methyltransferase mpaG' from Penicillium brevicompactum.